The sequence spans 107 residues: Small ribosomal subunit protein uS10 (107 aa).

Belongs to the universal ribosomal protein uS10 family. As to quaternary structure, part of the 30S ribosomal subunit.

In terms of biological role, involved in the binding of tRNA to the ribosomes. The sequence is that of Small ribosomal subunit protein uS10 from Deinococcus geothermalis (strain DSM 11300 / CIP 105573 / AG-3a).